The sequence spans 198 residues: MSPRVGRVERTTKETSVLVEINLDGTGKVDVATGVGFYDHMLDQLGRHGLFDLTVKTEGDLHIDTHHTIEDTALALGAAFKQALGDKVGIYRFGNCTVPLDESLAQVTVDLSGRPYLVHTEPENMAPMIGTYDTTMTRHIFESFVAQAQIALHIHVPYGRNAHHIVECQFKALARALRYASEHDPRAAGILPSTKGAL.

It belongs to the imidazoleglycerol-phosphate dehydratase family.

Its subcellular location is the cytoplasm. The catalysed reaction is D-erythro-1-(imidazol-4-yl)glycerol 3-phosphate = 3-(imidazol-4-yl)-2-oxopropyl phosphate + H2O. It functions in the pathway amino-acid biosynthesis; L-histidine biosynthesis; L-histidine from 5-phospho-alpha-D-ribose 1-diphosphate: step 6/9. This is Imidazoleglycerol-phosphate dehydratase from Streptomyces griseus subsp. griseus (strain JCM 4626 / CBS 651.72 / NBRC 13350 / KCC S-0626 / ISP 5235).